A 328-amino-acid polypeptide reads, in one-letter code: Cytochrome c biogenesis protein CcsA (328 aa).

A run of 8 helical transmembrane segments spans residues 15-35 (FLVL…PSIP), 36-56 (LLPG…AALL), 68-88 (ISNL…VHLI), 97-117 (LVGV…TLSL), 142-162 (VMML…AFLI), 236-256 (VIGL…VWAN), 263-283 (WSWD…AAYL), and 297-317 (AILA…VNLL).

Belongs to the CcmF/CycK/Ccl1/NrfE/CcsA family. May interact with ccs1.

The protein localises to the cellular thylakoid membrane. In terms of biological role, required during biogenesis of c-type cytochromes (cytochrome c6 and cytochrome f) at the step of heme attachment. This chain is Cytochrome c biogenesis protein CcsA, found in Microcystis aeruginosa (strain NIES-843 / IAM M-2473).